A 383-amino-acid chain; its full sequence is ATP phosphoribosyltransferase regulatory subunit (383 aa).

This sequence belongs to the class-II aminoacyl-tRNA synthetase family. HisZ subfamily. Heteromultimer composed of HisG and HisZ subunits.

It localises to the cytoplasm. Its pathway is amino-acid biosynthesis; L-histidine biosynthesis; L-histidine from 5-phospho-alpha-D-ribose 1-diphosphate: step 1/9. Required for the first step of histidine biosynthesis. May allow the feedback regulation of ATP phosphoribosyltransferase activity by histidine. In Neisseria meningitidis serogroup C / serotype 2a (strain ATCC 700532 / DSM 15464 / FAM18), this protein is ATP phosphoribosyltransferase regulatory subunit.